The following is a 312-amino-acid chain: GDP-L-fucose synthase (312 aa).

11 to 17 (GGRGMVG) contacts NADP(+). Catalysis depends on Y136, which acts as the Proton donor/acceptor. The NADP(+) site is built by K140 and H179. 3 residues coordinate substrate: K187, W202, and R209.

The protein belongs to the NAD(P)-dependent epimerase/dehydratase family. Fucose synthase subfamily.

The catalysed reaction is GDP-beta-L-fucose + NADP(+) = GDP-4-dehydro-alpha-D-rhamnose + NADPH + H(+). It functions in the pathway nucleotide-sugar biosynthesis; GDP-L-fucose biosynthesis via de novo pathway; GDP-L-fucose from GDP-alpha-D-mannose: step 2/2. Catalyzes the two-step NADP-dependent conversion of GDP-4-dehydro-6-deoxy-D-mannose to GDP-fucose, involving an epimerase and a reductase reaction. The polypeptide is GDP-L-fucose synthase (Azorhizobium caulinodans (strain ATCC 43989 / DSM 5975 / JCM 20966 / LMG 6465 / NBRC 14845 / NCIMB 13405 / ORS 571)).